The sequence spans 3038 residues: MAQSMYPNEPIVVVGSGCRFPGDANTPSKLWELLQHPRDVQSRIPKERFDVDTFYHPDGKHHGRTNAPYAYVLQDDLGAFDAAFFNIQAGEAESMDPQHRLLLETVYEAVTNAGMRIQDLQGTSTAVYVGVMTHDYETVSTRDLESIPTYSATGVAVSVASNRISYFFDWHGPSMTIDTACSSSLVAVHLAVQQLRTGQSSMAIAAGANLILGPMTFVLESKLSMLSPSGRSRMWDAGADGYARGEAVCSVVLKTLSQALRDGDTIECVIRETGVNQDGRTTGITMPNHSAQEALIKATYAQAGLDITKAEDRCQFFEAHGTGTPAGDPQEAEAIATAFFGHEQVARSDGNERAPLFVGSAKTVVGHTEGTAGLAGLMKASFAVRHGVIPPNLLFDKISPRVAPFYKNLRIPTEATQWPALPPGQPRRASVNSFGFGGTNAHAIIEEYMEPEQNQLRVSNNEDCPPMTGVLSLPLVLSAKSQRSLKIMMEEMLQFLQSHPEIHLHDLTWSLLRKRSVLPFRRAIVGHSHETIRRALEDAIEDGIVSSDFTTEVRGQPSVLGIFTGQGAQWPGMLKNLIEASPYVRNIVRELDDSLQSLPEKYRPSWTLLDQFMLEGEASNVQYATFSQPLCCAVQIVLVRLLEAARIRFTAVVGHSSGEIACAFAAGLISASLAIRIAYLRGVVSAGGARGTPGAMLAAGMSFEEAQEICELDAFEGRICVAASNSPDSVTFSGDANAIDHLKGMLEDESTFARLLKVDTAYHSHHMLPCADPYMQALEECGCAVADAGSPAGSVPWYSSVDAENRQMAARDVTAKYWKDNLVSPVLFSHAVQRAVVTHKALDIGIEVGCHPALKSPCVATIKDVLSGVDLAYTGCLERGKNDLDSFSRALAYLWERFGASSFDADEFMRAVAPDRPCMSVSKLLPAYPWDRSRRYWVESRATRHHLRGPKPHLLLGKLSEYSTPLSFQWLNFVRPRDIEWLDGHALQGQTVFPAAGYIVMAMEAALMIAGTHAKQVKLLEILDMSIDKAVIFDDEDSLVELNLTADVSRNAGEAGSMTISFKIDSCLSKEGNLSLSAKGQLALTIEDVNPRTTSASDQHHLPPPEEEHPHMNRVNINAFYHELGLMGYNYSKDFRRLHNMQRADLRASGTLDFIPLMDEGNGCPLLLHPASLDVAFQTVIGAYSSPGDRRLRCLYVPTHVDRITLVPSLCLATAESGCEKVAFNTINTYDKGDYLSGDIVVFDAEQTTLFQVENITFKPFSPPDASTDHAMFARWSWGPLTPDSLLDNPEYWATAQDKEAIPIIERIVYFYIRSFLSQLTLEERQQAAFHLQKQIEWLEQVLASAKEGRHLWYDPGWENDTEAQIEHLCTANSYHPHVRLVQRVGQHLLPTVRSNGNPFDLLDHDGLLTEFYTNTLSFGPALHYARELVAQIAHRYQSMDILEIGAGTGGATKYVLATPQLGFNSYTYTDISTGFFEQAREQFAPFEDRMVFEPLDIRRSPAEQGFEPHAYDLIIASNVLHATPDLEKTMAHARSLLKPGGQMVILEITHKEHTRLGFIFGLFADWWAGVDDGRCTEPFVSFDRWDAILKRVGFSGVDSRTTDRDANLFPTSVFSTHAIDATVEYLDAPLASSGTVKDSYPPLVVVGGQTPQSQRLLNDIKAIMPPRPLQTYKRLVDLLDAEELPMKSTFVMLTELDEELFAGLTEETFEATKLLLTYASNTVWLTENAWVQHPHQASTIGMLRSIRREHPDLGVHVLDVDAVETFDATFLVEQVLRLEEHTDELASSTTWTQEPEVSWCKGRPWIPRLKRDLARNNRMNSSRRPIYEMIDSSRAPVALQTARDSSSYFLESAETWFVPESVQQMETKTIYVHFSCPHALRVGQLGFFYLVQGHVQEGNREVPVVALAERNASIVHVRPDYIYTEADNNLSEGGGSLMVTVLAAAVLAETVISTAKCLGVTDSILVLNPPSICGQMLLHAGEEIGLQVHLATTSGNRSSVSAGDAKSWLTLHARDTDWHLRRVLPRGVQALVDLSADQSCEGLTQRMMKVLMPGCAHYRAADLFTDTVSTELHSGSRHQASLPAAYWEHVVSLARQGLPSVSEGWEVMPCTQFAAHADKTRPDLSTVISWPRESDEATLPTRVRSIDAETLFAADKTYLLVGLTGDLGRSLGRWMVQHGACHIVLTSRNPQVNPKWLAHVEELGGRVTVLSMDVTSQNSVEAGLAKLKDLHLPPVGGIAFGPLVLQDVMLNNMELPMMEMVLNPKVEGVRILHEKFSDPTSSNPLDFFVMFSSIVAVMGNPGQANYSAANCYLQALAQQRVASGLAASTIDIGAVYGVGFVTRAELEEDFNAIRFMFDSVEEHELHTLFAEAVVAGRRAVHQQEQQRKFATVLDMADLELTTGIPPLDPALKDRITFFDDPRIGNLKIPEYRGAKAGEGAAGSKGSVKEQLLQATNLDQVRQIVIDGLSAKLQVTLQIPDGESVHPTIPLIDQGVDSLGAVTVGTWFSKQLYLDLPLLKVLGGASITDLANEAAARLPPSSIPLVAATDGGAESTDNTSENEVSGREDTDLSAAATITEPSSADEDDTEPGDEDVPRSHHPLSLGQEYSWRIQQGAEDPTVFNNTIGMFMKGSIDLKRLYKALRAVLRRHEIFRTGFANVDENGMAQLVFGQTKNKVQTIQVSDRAGAEEGYRQLVQTRYNPAAGDTLRLVDFFWGQDDHLLVVAYHRLVGDGSTTENIFVEAGQLYDGTSLSPHVPQFADLAARQRAMLEDGRMEEDLAYWKKMHYRPSSIPVLPLMRPLVGNSSRSDTPNFQHCGPWQQHEAVARLDPMVAFRIKERSRKHKATPMQFYLAAYQVLLARLTDSTDLTVGLADTNRATVDEMAAMGFFANLLPLRFRDFRPHITFGEHLIATRDLVREALQHARVPYGVLLDQLGLEVPVPTSNQPAPLFQAVFDYKQGQAESGTIGGAKITEVIATRERTPYDVVLEMSDDPTKDPLLTAKLQSSRYEAHHPQAFLESYMSLLSMFSMNPALKLA.

The Ketosynthase family 3 (KS3) domain maps to 8 to 447; it reads NEPIVVVGSG…GTNAHAIIEE (440 aa). Residues cysteine 181, histidine 320, and histidine 367 each act as for beta-ketoacyl synthase activity in the active site. Residues 562–889 are malonyl-CoA:ACP transacylase (MAT) domain; it reads IFTGQGAQWP…GKNDLDSFSR (328 aa). The active-site For malonyltransferase activity is serine 656. Residues 695–757 form a lovC-binding region; it reads AMLAAGMSFE…DESTFARLLK (63 aa). The interval 953-1089 is N-terminal hotdog fold; sequence HLLLGKLSEY…GQLALTIEDV (137 aa). A dehydratase (DH) domain region spans residues 953 to 1263; the sequence is HLLLGKLSEY…ENITFKPFSP (311 aa). Residues 953–1267 enclose the PKS/mFAS DH domain; sequence HLLLGKLSEY…FKPFSPPDAS (315 aa). Histidine 985 functions as the Proton acceptor; for dehydratase activity in the catalytic mechanism. Residues 1107–1267 form a C-terminal hotdog fold region; sequence EEHPHMNRVN…FKPFSPPDAS (161 aa). The active-site Proton donor; for dehydratase activity is aspartate 1174. A methyltransferase (CMet) domain region spans residues 1443–1543; it reads LEIGAGTGGA…ARSLLKPGGQ (101 aa). A ketoreductase (KR) domain region spans residues 2139-2437; sequence TLPTRVRSID…KIPEYRGAKA (299 aa). The 76-residue stretch at 2463 to 2538 folds into the Carrier domain; sequence QIVIDGLSAK…DLANEAAARL (76 aa). O-(pantetheine 4'-phosphoryl)serine is present on serine 2498. Residues 2546-2602 form a disordered region; sequence VAATDGGAESTDNTSENEVSGREDTDLSAAATITEPSSADEDDTEPGDEDVPRSHHP. The span at 2583-2594 shows a compositional bias: acidic residues; that stretch reads SADEDDTEPGDE. The interval 2602–2952 is inactive Condensation domain; sequence PLSLGQEYSW…PTSNQPAPLF (351 aa).

As to quaternary structure, homodimer. Each MAT domain from the lovB homodimer binds one lovC molecule to form the final active lovB-lovC megasynthase complex. It depends on pantetheine 4'-phosphate as a cofactor.

The catalysed reaction is holo-[lovastatin nonaketide synthase] + 9 malonyl-CoA + S-adenosyl-L-methionine + 11 NADPH + 19 H(+) = dihydromonacolin L-[lovastatin nonaketide synthase] + S-adenosyl-L-homocysteine + 9 CO2 + 11 NADP(+) + 9 CoA + 6 H2O. The protein operates within polyketide biosynthesis; lovastatin biosynthesis. Functionally, lovastatin nonaketide synthase; part of the gene cluster that mediates the biosynthesis of lovastatin (also known as mevinolin, mevacor or monacolin K), a hypolipidemic inhibitor of (3S)-hydroxymethylglutaryl-coenzyme A (HMG-CoA) reductase (HMGR). The first step in the biosynthesis of lovastatin is the production of dihydromonacolin L acid by the lovastatin nonaketide synthase lovB and the trans-acting enoyl reductase lovC (called the lovB-lovC megasynthase complex) via condensation of one acetyl-CoA unit and 8 malonyl-CoA units. The formation of the LovB/C complex is essential for the integrity of the catalytic chamber to the complete total synthesis of DML acid. Dihydromonacolin L acid is released from lovB by the thioesterase lovG. Next, dihydromonacolin L acid is oxidized by the dihydromonacolin L monooxygenase lovA twice to form monacolin J acid. The 2-methylbutyrate moiety of lovastatin is synthesized by the lovastatin diketide synthase lovF via condensation of one acetyl-CoA unit and one malonyl-CoA unit. Finally, the covalent attachment of this moiety to monacolin J acid is catalyzed by the transesterase lovD to yield lovastatin. LovD has broad substrate specificity and can also convert monacolin J to simvastatin using alpha-dimethylbutanoyl-S-methyl-3-mercaptopropionate (DMB-S-MMP) as the thioester acyl donor, and can also catalyze the reverse reaction and function as hydrolase in vitro. LovD has much higher activity with LovF-bound 2-methylbutanoate than with free diketide substrates. This chain is Lovastatin nonaketide synthase, polyketide synthase component, found in Aspergillus terreus.